The primary structure comprises 663 residues: MDTDNSTLPTEQSAVRETCDRDVTMSPRKRRRLSVSLEPELTEPEAAGTPGERCSTADTPESTASEPRSLFNSTPTEGNIAPFLTKHIKDQHASRNRFAPIDSSLPRRKADSKYCYRHRPDLKCRRQAAEPTVDQMQRDLSTLSQNDQQSIAHFWSLFSAAPSKHRNLMLQGIVAQCCFPQLSFLSASVRDLIRIDFVTALPPEISFKILSYLDTASLCSAAQVSHSWRALADDDVVWHRMCEQHIDRKCEKCGWGLPMLDRKRLKDTKRQVQLRAAGKEIAPNQRPQQQHRPWKAVYMDRFKVGTNWKYGRCTTTIFRGHTNGVMCLQFDDNILATGSYDATIKIWDIETGKEIRTLRGHESTIRCLQFDDTKLISGSLDRTIKVWNWRSGECISTYTGHQGGVLCLHFDSTTLASGSKDNTIKIWNFHDKSTRILRGHADWVNSVKLDTASRTVFSASDDLTVRIWDLDTGKCIHSYAGHVGQVQQVLPLPREFEFKHQSNCADDRSDRLSGSESPDHRGSHGYGSNNAPDQQPNTSAPPTEPMSPLFEALFTEDQGRPAPPRYMLTAALDLTLRLWEVHTGRCLRTFFGHIEGVWGLAADTLRFVSGAQDHMAKVWDPRTGTCERTFTGHRGPVTCVSLSDSRMATGSEDSEVRMYSFKA.

Composition is skewed to polar residues over residues 1–15 (MDTDNSTLPTEQSAV) and 56–77 (TADTPESTASEPRSLFNSTPTE). Positions 1 to 78 (MDTDNSTLPT…SLFNSTPTEG (78 aa)) are disordered. The F-box domain maps to 195–241 (IDFVTALPPEISFKILSYLDTASLCSAAQVSHSWRALADDDVVWHRM). 4 WD repeats span residues 320–359 (GHTNGVMCLQFDDNILATGSYDATIKIWDIETGKEIRTLR), 361–399 (HESTIRCLQFDDTKLISGSLDRTIKVWNWRSGECISTYT), 400–437 (GHQGGVLCLHFDSTTLASGSKDNTIKIWNFHDKSTRIL), and 439–480 (GHAD…HSYA). The span at 502–522 (SNCADDRSDRLSGSESPDHRG) shows a compositional bias: basic and acidic residues. The tract at residues 502–547 (SNCADDRSDRLSGSESPDHRGSHGYGSNNAPDQQPNTSAPPTEPMS) is disordered. The span at 526-541 (YGSNNAPDQQPNTSAP) shows a compositional bias: polar residues. WD repeat units lie at residues 544–589 (EPMS…CLRT), 592–629 (GHIEGVWGLAADTLRFVSGAQDHMAKVWDPRTGTCERT), and 632–663 (GHRGPVTCVSLSDSRMATGSEDSEVRMYSFKA).

It belongs to the WD repeat MET30/SCONB/SCON-2 family. Component of the SCF(sconB) E3 ubiquitin ligase complex.

It participates in protein modification; protein ubiquitination. Its function is as follows. Component of the SCF(sconB) E3 ubiquitin ligase complex involved in the regulation of sulfur metabolite repression, probably by mediating the inactivation or degradation of the metR transcription factor. The chain is Probable E3 ubiquitin ligase complex SCF subunit sconB (sconB) from Trichophyton verrucosum (strain HKI 0517).